We begin with the raw amino-acid sequence, 177 residues long: Translation initiation factor IF-3 (177 aa).

It belongs to the IF-3 family. As to quaternary structure, monomer.

Its subcellular location is the cytoplasm. Its function is as follows. IF-3 binds to the 30S ribosomal subunit and shifts the equilibrium between 70S ribosomes and their 50S and 30S subunits in favor of the free subunits, thus enhancing the availability of 30S subunits on which protein synthesis initiation begins. This Acaryochloris marina (strain MBIC 11017) protein is Translation initiation factor IF-3.